The following is a 428-amino-acid chain: Spliceosome RNA helicase DDX39B (428 aa).

Residues 1-19 (MAENDVDNELLDYEEDEVE) are compositionally biased toward acidic residues. The interval 1–35 (MAENDVDNELLDYEEDEVENAAGGDGSEAPPKKDV) is disordered. The short motif at 45-73 (SGFRDFLLKPELLRAIVDCGFEHPSEVQH) is the Q motif element. A Helicase ATP-binding domain is found at 76 to 249 (IPQAILGMDV…RKFMQDPMEI (174 aa)). ATP is bound at residue 89–96 (AKSGMGKT). The short motif at 196 to 199 (DECD) is the DECD box element. Positions 261–422 (GLQQYYVKLK…ELPDEIDISS (162 aa)) constitute a Helicase C-terminal domain.

This sequence belongs to the DEAD box helicase family. DECD subfamily. As to quaternary structure, component of the transcription/export (TREX) complex at least composed of ALYREF/THOC4, DDX39B, SARNP/CIP29, CHTOP and the THO subcomplex.

It localises to the nucleus. The protein resides in the nucleus speckle. The catalysed reaction is ATP + H2O = ADP + phosphate + H(+). Involved in nuclear export of spliced and unspliced mRNA. Component of the TREX complex which is thought to couple mRNA transcription, processing and nuclear export, and specifically associates with spliced mRNA and not with unspliced pre-mRNA. The TREX complex is recruited to spliced mRNAs by a transcription-independent mechanism, binds to mRNA upstream of the exon-junction complex (EJC) and is recruited in a splicing- and cap-dependent manner to a region near the 5' end of the mRNA where it functions in mRNA export to the cytoplasm via the TAP/NXF1 pathway. Involved in transcription elongation and genome stability. In terms of biological role, splice factor that is required for the first ATP-dependent step in spliceosome assembly and for the interaction of U2 snRNP with the branchpoint. Has both RNA-stimulated ATP binding/hydrolysis activity and ATP-dependent RNA unwinding activity. Even with the stimulation of RNA, the ATPase activity is weak. Can only hydrolyze ATP but not other NTPs. The RNA stimulation of ATPase activity does not have a strong preference for the sequence and length of the RNA. However, ssRNA stimulates the ATPase activity much more strongly than dsRNA. Can unwind 5' or 3' overhangs or blunt end RNA duplexes in vitro. The ATPase and helicase activities are not influenced by U2AF2; the effect of ALYREF/THOC4 is reported conflictingly. The chain is Spliceosome RNA helicase DDX39B (DDX39B) from Gallus gallus (Chicken).